We begin with the raw amino-acid sequence, 589 residues long: Intermediate filament protein B (589 aa).

The head stretch occupies residues 1-84; sequence SLKQSQESSE…LEATDKEKKE (84 aa). Positions 81–433 constitute an IF rod domain; it reads EKKEMQGLND…KMLEGEESRV (353 aa). A coil 1A region spans residues 85 to 116; that stretch reads MQGLNDRLGNYIDRVKKLEEQNRKLVADLDEL. Positions 117–130 are linker 1; that stretch reads RGRWGKDTSEIKIQ. The interval 131-268 is coil 1B; the sequence is YSDSLRDARK…RVHEQEVKEL (138 aa). The interval 269-285 is linker 12; sequence QALLAQAPADTREFFKN. The coil 2 stretch occupies residues 286 to 433; the sequence is ELALAIRDIK…KMLEGEESRV (148 aa). The segment at 434–589 is tail; the sequence is GLRQMVEQVV…HTQKTIQTGQ (156 aa). The disordered stretch occupies residues 446-470; that stretch reads HSLQQQEDTDSTRNVRGEVSTKTTF. One can recognise an LTD domain in the interval 466–584; the sequence is TKTTFQRSAK…DERATHTQKT (119 aa).

It belongs to the intermediate filament family. As to quaternary structure, a and B can form homopolymers. Giant body muscle cells.

It is found in the cytoplasm. The polypeptide is Intermediate filament protein B (Ascaris suum (Pig roundworm)).